The primary structure comprises 364 residues: Aminomethyltransferase (364 aa).

The protein belongs to the GcvT family. As to quaternary structure, the glycine cleavage system is composed of four proteins: P, T, L and H.

It carries out the reaction N(6)-[(R)-S(8)-aminomethyldihydrolipoyl]-L-lysyl-[protein] + (6S)-5,6,7,8-tetrahydrofolate = N(6)-[(R)-dihydrolipoyl]-L-lysyl-[protein] + (6R)-5,10-methylene-5,6,7,8-tetrahydrofolate + NH4(+). In terms of biological role, the glycine cleavage system catalyzes the degradation of glycine. This Proteus mirabilis (strain HI4320) protein is Aminomethyltransferase.